The sequence spans 414 residues: Calcium/calmodulin-dependent protein kinase cmkA (414 aa).

Positions Y23 to L278 constitute a Protein kinase domain. Residues L29–V37 and K50 contribute to the ATP site. Catalysis depends on D142, which acts as the Proton acceptor. Positions L278–I314 are autoinhibitory domain. The tract at residues R293 to E315 is calmodulin-binding. 2 disordered regions span residues Q320–L375 and E394–S414. Residues S351 to N364 are compositionally biased toward polar residues.

Belongs to the protein kinase superfamily. CAMK Ser/Thr protein kinase family. CaMK subfamily. In terms of assembly, monomer. Post-translationally, autophosphorylated in a calcium/calmodulin-dependent manner.

The enzyme catalyses L-seryl-[protein] + ATP = O-phospho-L-seryl-[protein] + ADP + H(+). It carries out the reaction L-threonyl-[protein] + ATP = O-phospho-L-threonyl-[protein] + ADP + H(+). Its activity is regulated as follows. Activated by Ca(2+)/calmodulin. Binding of calmodulin may relieve intrasteric autoinhibition. Functionally, calcium/calmodulin-dependent protein kinase. Required in nuclear division cycle for progression from G2 to mitosis. Required for hyphal growth. This Emericella nidulans (strain FGSC A4 / ATCC 38163 / CBS 112.46 / NRRL 194 / M139) (Aspergillus nidulans) protein is Calcium/calmodulin-dependent protein kinase cmkA (cmkA).